The primary structure comprises 156 residues: Endoribonuclease YbeY (156 aa).

Zn(2+) contacts are provided by histidine 122, histidine 126, and histidine 132.

Belongs to the endoribonuclease YbeY family. Zn(2+) serves as cofactor.

The protein resides in the cytoplasm. Its function is as follows. Single strand-specific metallo-endoribonuclease involved in late-stage 70S ribosome quality control and in maturation of the 3' terminus of the 16S rRNA. In Geobacillus sp. (strain WCH70), this protein is Endoribonuclease YbeY.